The primary structure comprises 470 residues: Argininosuccinate lyase (470 aa).

It belongs to the lyase 1 family. Argininosuccinate lyase subfamily.

It is found in the cytoplasm. It catalyses the reaction 2-(N(omega)-L-arginino)succinate = fumarate + L-arginine. It participates in amino-acid biosynthesis; L-arginine biosynthesis; L-arginine from L-ornithine and carbamoyl phosphate: step 3/3. The sequence is that of Argininosuccinate lyase from Ehrlichia chaffeensis (strain ATCC CRL-10679 / Arkansas).